A 111-amino-acid polypeptide reads, in one-letter code: WAP four-disulfide core domain protein 12 (111 aa).

Residues M1–G23 form the signal peptide. Positions G27–V74 constitute a WAP domain. Disulfide bonds link C34/C62, C41/C66, C49/C61, and C55/C70. Residues G80–K111 are disordered. Positions G102–K111 are enriched in polar residues.

In terms of tissue distribution, highly expressed in prostate, skin, lung and esophagus. Weakly expressed in skeletal muscle, epididymis, kidney, trachea, salivary gland, testis and seminal vesicle.

It localises to the secreted. In terms of biological role, antibacterial protein. Putative acid-stable proteinase inhibitor. This Homo sapiens (Human) protein is WAP four-disulfide core domain protein 12 (WFDC12).